Here is a 316-residue protein sequence, read N- to C-terminus: Lys-63-specific deubiquitinase BRCC36 (316 aa).

An N-acetylalanine modification is found at A2. Residues 12–179 form the MPN domain; the sequence is VHLESDAFLV…YTCFQSIQAQ (168 aa). Zn(2+)-binding residues include H122, H124, and D135. The JAMM motif motif lies at 122-135; the sequence is HSHPHITVWPSHVD. S258 is subject to Phosphoserine.

Belongs to the peptidase M67A family. BRCC36 subfamily. As to quaternary structure, component of the ARISC complex, at least composed of UIMC1/RAP80, ABRAXAS1, BRCC3/BRCC36, BABAM2 and BABAM1/NBA1. Component of the BRCA1-A complex, at least composed of BRCA1, BARD1, UIMC1/RAP80, ABRAXAS1, BRCC3/BRCC36, BABAM2 and BABAM1/NBA1. In the BRCA1-A complex, interacts directly with ABRAXAS1 and BABAM2. Component of the BRISC complex, at least composed of ABRAXAS2, BRCC3/BRCC36, BABAM2 and BABAM1/NBA1. Identified in a complex with SHMT2 and the other subunits of the BRISC complex. In the BRISC complex, interacts directly with ABRAXAS2. Identified in a complex with ABRAXAS2 and NUMA1. The BRISC complex interacts with the CSN complex. Component of the BRCA1/BRCA2 containing complex (BRCC), which also contains BRCA1, BRCA2, BARD1, BABAM2 and RAD51. BRCC is a ubiquitin E3 ligase complex that enhances cellular survival following DNA damage. Interacts with BRCA1. Binds polyubiquitin. Interacts with PWWP2B. Interacts with HDAC1; this interaction is enhanced in the presence of PWWP2B. Zn(2+) is required as a cofactor.

The protein resides in the nucleus. It is found in the cytoplasm. The protein localises to the cytoskeleton. Its subcellular location is the spindle pole. Its function is as follows. Metalloprotease that specifically cleaves 'Lys-63'-linked polyubiquitin chains. Does not have activity toward 'Lys-48'-linked polyubiquitin chains. Component of the BRCA1-A complex, a complex that specifically recognizes 'Lys-63'-linked ubiquitinated histones H2A and H2AX at DNA lesions sites, leading to target the BRCA1-BARD1 heterodimer to sites of DNA damage at double-strand breaks (DSBs). In the BRCA1-A complex, it specifically removes 'Lys-63'-linked ubiquitin on histones H2A and H2AX, antagonizing the RNF8-dependent ubiquitination at double-strand breaks (DSBs). Catalytic subunit of the BRISC complex, a multiprotein complex that specifically cleaves 'Lys-63'-linked ubiquitin in various substrates. Mediates the specific 'Lys-63'-specific deubiquitination associated with the COP9 signalosome complex (CSN), via the interaction of the BRISC complex with the CSN complex. The BRISC complex is required for normal mitotic spindle assembly and microtubule attachment to kinetochores via its role in deubiquitinating NUMA1. Plays a role in interferon signaling via its role in the deubiquitination of the interferon receptor IFNAR1; deubiquitination increases IFNAR1 activity by enhancing its stability and cell surface expression. Acts as a regulator of the NLRP3 inflammasome by mediating deubiquitination of NLRP3, leading to NLRP3 inflammasome assembly. Down-regulates the response to bacterial lipopolysaccharide (LPS) via its role in IFNAR1 deubiquitination. Deubiquitinates HDAC1 and PWWP2B leading to their stabilization. This chain is Lys-63-specific deubiquitinase BRCC36 (BRCC3), found in Callithrix jacchus (White-tufted-ear marmoset).